Consider the following 382-residue polypeptide: Glutamyl-tRNA reductase (382 aa).

Substrate is bound by residues 38–41, Ser-85, 90–92, and Gln-96; these read TCNR and ENQ. Residue Cys-39 is the Nucleophile of the active site. NADP(+) is bound at residue 164 to 169; it reads GAGEMG.

This sequence belongs to the glutamyl-tRNA reductase family. As to quaternary structure, homodimer.

The enzyme catalyses (S)-4-amino-5-oxopentanoate + tRNA(Glu) + NADP(+) = L-glutamyl-tRNA(Glu) + NADPH + H(+). The protein operates within porphyrin-containing compound metabolism; protoporphyrin-IX biosynthesis; 5-aminolevulinate from L-glutamyl-tRNA(Glu): step 1/2. Its function is as follows. Catalyzes the NADPH-dependent reduction of glutamyl-tRNA(Glu) to glutamate 1-semialdehyde (GSA). The chain is Glutamyl-tRNA reductase from Methanococcus maripaludis (strain C6 / ATCC BAA-1332).